Here is a 670-residue protein sequence, read N- to C-terminus: DNA ligase (670 aa).

NAD(+)-binding positions include 32–36 (DAEYD), 81–82 (SL), and glutamate 113. Residue lysine 115 is the N6-AMP-lysine intermediate of the active site. Residues arginine 136, glutamate 173, lysine 290, and lysine 314 each coordinate NAD(+). Zn(2+) is bound by residues cysteine 408, cysteine 411, cysteine 426, and cysteine 432. A BRCT domain is found at 592–670 (EIDSPFAGKT…EAEMIRLLGE (79 aa)).

It belongs to the NAD-dependent DNA ligase family. LigA subfamily. Mg(2+) is required as a cofactor. The cofactor is Mn(2+).

The catalysed reaction is NAD(+) + (deoxyribonucleotide)n-3'-hydroxyl + 5'-phospho-(deoxyribonucleotide)m = (deoxyribonucleotide)n+m + AMP + beta-nicotinamide D-nucleotide.. DNA ligase that catalyzes the formation of phosphodiester linkages between 5'-phosphoryl and 3'-hydroxyl groups in double-stranded DNA using NAD as a coenzyme and as the energy source for the reaction. It is essential for DNA replication and repair of damaged DNA. The polypeptide is DNA ligase (Yersinia pseudotuberculosis serotype IB (strain PB1/+)).